The chain runs to 160 residues: SsrA-binding protein (160 aa).

The disordered stretch occupies residues 132–160 (KIHDKRDDMQKKDAQQEIARALKSSNRYE). The segment covering 135–146 (DKRDDMQKKDAQ) has biased composition (basic and acidic residues).

This sequence belongs to the SmpB family.

It is found in the cytoplasm. In terms of biological role, required for rescue of stalled ribosomes mediated by trans-translation. Binds to transfer-messenger RNA (tmRNA), required for stable association of tmRNA with ribosomes. tmRNA and SmpB together mimic tRNA shape, replacing the anticodon stem-loop with SmpB. tmRNA is encoded by the ssrA gene; the 2 termini fold to resemble tRNA(Ala) and it encodes a 'tag peptide', a short internal open reading frame. During trans-translation Ala-aminoacylated tmRNA acts like a tRNA, entering the A-site of stalled ribosomes, displacing the stalled mRNA. The ribosome then switches to translate the ORF on the tmRNA; the nascent peptide is terminated with the 'tag peptide' encoded by the tmRNA and targeted for degradation. The ribosome is freed to recommence translation, which seems to be the essential function of trans-translation. This is SsrA-binding protein from Leptospira borgpetersenii serovar Hardjo-bovis (strain JB197).